We begin with the raw amino-acid sequence, 455 residues long: Glycosyl hydrolase family 109 protein (455 aa).

Positions 1-33 (MAGIDRRGFLKASMASVAAAALAGCASQQGTSA) form a signal peptide, tat-type signal. NAD(+) is bound by residues 62–63 (ER), D84, Q112, 133–136 (WALH), 153–154 (EV), and N182. Substrate-binding positions include Y211, R230, 242-245 (YPTH), and Y324. Y242 is a binding site for NAD(+).

Belongs to the Gfo/Idh/MocA family. Glycosyl hydrolase 109 subfamily. Requires NAD(+) as cofactor. Post-translationally, predicted to be exported by the Tat system. The position of the signal peptide cleavage has not been experimentally proven.

In terms of biological role, glycosidase. The chain is Glycosyl hydrolase family 109 protein from Shewanella amazonensis (strain ATCC BAA-1098 / SB2B).